We begin with the raw amino-acid sequence, 498 residues long: Glycerol kinase (498 aa).

Residue Thr12 coordinates ADP. The ATP site is built by Thr12, Thr13, and Ser14. Residue Thr12 coordinates sn-glycerol 3-phosphate. Arg16 is an ADP binding site. Residues Arg82, Glu83, and Tyr134 each contribute to the sn-glycerol 3-phosphate site. The glycerol site is built by Arg82, Glu83, and Tyr134. His230 carries the phosphohistidine; by HPr modification. A sn-glycerol 3-phosphate-binding site is contributed by Asp244. The glycerol site is built by Asp244 and Gln245. 2 residues coordinate ADP: Thr266 and Gly309. ATP contacts are provided by Thr266, Gly309, Gln313, and Gly410. 2 residues coordinate ADP: Gly410 and Asn414.

Belongs to the FGGY kinase family. In terms of assembly, homotetramer and homodimer (in equilibrium). The phosphoenolpyruvate-dependent sugar phosphotransferase system (PTS), including enzyme I, and histidine-containing protein (HPr) are required for the phosphorylation, which leads to the activation of the enzyme.

The catalysed reaction is glycerol + ATP = sn-glycerol 3-phosphate + ADP + H(+). Its pathway is polyol metabolism; glycerol degradation via glycerol kinase pathway; sn-glycerol 3-phosphate from glycerol: step 1/1. With respect to regulation, activated by phosphorylation and inhibited by fructose 1,6-bisphosphate (FBP). Its function is as follows. Key enzyme in the regulation of glycerol uptake and metabolism. Catalyzes the phosphorylation of glycerol to yield sn-glycerol 3-phosphate. The chain is Glycerol kinase from Staphylococcus aureus (strain Mu50 / ATCC 700699).